Here is a 428-residue protein sequence, read N- to C-terminus: D-amino acid dehydrogenase (428 aa).

3 to 17 (VVILGSGVVGVASAY) is an FAD binding site.

This sequence belongs to the DadA oxidoreductase family. FAD serves as cofactor.

The catalysed reaction is a D-alpha-amino acid + A + H2O = a 2-oxocarboxylate + AH2 + NH4(+). It participates in amino-acid degradation; D-alanine degradation; NH(3) and pyruvate from D-alanine: step 1/1. Its function is as follows. Oxidative deamination of D-amino acids. The sequence is that of D-amino acid dehydrogenase from Burkholderia cenocepacia (strain ATCC BAA-245 / DSM 16553 / LMG 16656 / NCTC 13227 / J2315 / CF5610) (Burkholderia cepacia (strain J2315)).